The primary structure comprises 92 residues: MPKLEMMLLVLLILPLSYFSAAGGQVVQGDLRSDVLARYLQRGDRDARECQVNTPGSRWGKCCLNRMCGPMCCPESHCYCVYHRRRGHGCSC.

The N-terminal stretch at 1–24 is a signal peptide; it reads MPKLEMMLLVLLILPLSYFSAAGG. Positions 25-45 are excised as a propeptide; it reads QVVQGDLRSDVLARYLQRGDR. A 4-carboxyglutamate modification is found at Glu49. Residue Pro55 is modified to 4-hydroxyproline. 4 disulfide bridges follow: Cys63–Cys72, Cys68–Cys80, Cys73–Cys90, and Cys78–Cys92.

Belongs to the conotoxin D superfamily. As to quaternary structure, hetero-, homo- or pseudo-homodimer (identical sequence, different post-translational modifications). Expressed by the venom duct.

It is found in the secreted. Functionally, alpha-conotoxins act on postsynaptic membranes, they bind to the nicotinic acetylcholine receptors (nAChR) and thus inhibit them. Through its two C-terminal domains, this homodimeric protein would bind to two nAChR allosteric sites, located outside the nAChR C-loop of the principal binding face and at the adjacent binding interface in a clockwise direction. This toxin specifically blocks mammalian neuronal nAChR of the alpha-7/CHRNA7, alpha-3-beta-2/CHRNA3-CHRNB2 and alpha-4-beta-2/CHRNA4-CHRNB2 subtypes. In Conus rattus (Rat cone), this protein is Alpha-conotoxin-like Rt20.1.